Reading from the N-terminus, the 194-residue chain is Small ribosomal subunit protein uS4c (194 aa).

Residues 82 to 143 enclose the S4 RNA-binding domain; sequence MRLDNILFRL…KERSKVLIQN (62 aa).

This sequence belongs to the universal ribosomal protein uS4 family. In terms of assembly, part of the 30S ribosomal subunit. Contacts protein S5. The interaction surface between S4 and S5 is involved in control of translational fidelity.

Its subcellular location is the plastid. It localises to the chloroplast. In terms of biological role, one of the primary rRNA binding proteins, it binds directly to 16S rRNA where it nucleates assembly of the body of the 30S subunit. With S5 and S12 plays an important role in translational accuracy. The sequence is that of Small ribosomal subunit protein uS4c (rps4) from Trimezia steyermarkii (Steyermark's trimezia).